The following is a 321-amino-acid chain: Homoserine O-succinyltransferase (321 aa).

The Acyl-thioester intermediate role is filled by cysteine 142. Substrate contacts are provided by lysine 163 and serine 192. Histidine 235 functions as the Proton acceptor in the catalytic mechanism. Glutamate 237 is a catalytic residue. Arginine 249 contacts substrate.

Belongs to the MetA family.

The protein localises to the cytoplasm. It carries out the reaction L-homoserine + succinyl-CoA = O-succinyl-L-homoserine + CoA. Its pathway is amino-acid biosynthesis; L-methionine biosynthesis via de novo pathway; O-succinyl-L-homoserine from L-homoserine: step 1/1. Its function is as follows. Transfers a succinyl group from succinyl-CoA to L-homoserine, forming succinyl-L-homoserine. This chain is Homoserine O-succinyltransferase, found in Shewanella loihica (strain ATCC BAA-1088 / PV-4).